The primary structure comprises 272 residues: Putative pyruvate, phosphate dikinase regulatory protein (272 aa).

147–154 contacts ADP; sequence GLSRTSKT.

This sequence belongs to the pyruvate, phosphate/water dikinase regulatory protein family. PDRP subfamily.

The enzyme catalyses N(tele)-phospho-L-histidyl/L-threonyl-[pyruvate, phosphate dikinase] + ADP = N(tele)-phospho-L-histidyl/O-phospho-L-threonyl-[pyruvate, phosphate dikinase] + AMP + H(+). It catalyses the reaction N(tele)-phospho-L-histidyl/O-phospho-L-threonyl-[pyruvate, phosphate dikinase] + phosphate + H(+) = N(tele)-phospho-L-histidyl/L-threonyl-[pyruvate, phosphate dikinase] + diphosphate. Its function is as follows. Bifunctional serine/threonine kinase and phosphorylase involved in the regulation of the pyruvate, phosphate dikinase (PPDK) by catalyzing its phosphorylation/dephosphorylation. In Clostridium botulinum (strain Alaska E43 / Type E3), this protein is Putative pyruvate, phosphate dikinase regulatory protein.